Reading from the N-terminus, the 357-residue chain is Putative minor fimbrial subunit PmfE (357 aa).

The N-terminal stretch at 1–28 (MILNKKNIHSKSVMLFCAGIVSLMPLHA) is a signal peptide.

Its subcellular location is the fimbrium. The protein is Putative minor fimbrial subunit PmfE (pmfE) of Proteus mirabilis (strain HI4320).